The sequence spans 598 residues: Vanadium-dependent bromoperoxidase (598 aa).

Ca(2+) contacts are provided by Phe-361, Gln-363, Asp-365, Asp-368, and Gln-370. Residues Lys-400 and Arg-408 each contribute to the vanadate site. His-480 is an active-site residue. 5 residues coordinate vanadate: Ser-485, Gly-486, His-487, Arg-547, and His-553. The active site involves His-487.

The protein belongs to the vanadium-dependent haloperoxidase family. Homododecamer. The cofactor is Ca(2+). Vanadate serves as cofactor.

It catalyses the reaction RH + Br(-) + H2O2 = RBr + 2 H2O.. In terms of biological role, catalyzes the halogenation of organic substrates in the presence of hydrogen peroxide. The protein is Vanadium-dependent bromoperoxidase of Corallina pilulifera (Red coralline alga).